We begin with the raw amino-acid sequence, 220 residues long: LOB domain-containing protein 31 (220 aa).

The 103-residue stretch at Gly10–Leu112 folds into the LOB domain. Positions Gly117–Ile172 are disordered. Residues Ser123–Leu139 are compositionally biased toward polar residues.

It belongs to the LOB domain-containing protein family. In terms of tissue distribution, expressed in roots, stems and flowers.

The sequence is that of LOB domain-containing protein 31 (LBD31) from Arabidopsis thaliana (Mouse-ear cress).